Reading from the N-terminus, the 517-residue chain is Crotonobetaine/carnitine--CoA ligase (517 aa).

The protein belongs to the ATP-dependent AMP-binding enzyme family.

The enzyme catalyses 4-(trimethylamino)butanoate + ATP + CoA = 4-(trimethylamino)butanoyl-CoA + AMP + diphosphate. It carries out the reaction crotonobetaine + ATP + CoA = crotonobetainyl-CoA + AMP + diphosphate. The catalysed reaction is (R)-carnitine + ATP + CoA = (R)-carnitinyl-CoA + AMP + diphosphate. Its pathway is amine and polyamine metabolism; carnitine metabolism. Its function is as follows. Catalyzes the transfer of CoA to carnitine, generating the initial carnitinyl-CoA needed for the CaiB reaction cycle. Also has activity toward crotonobetaine and gamma-butyrobetaine. This Salmonella paratyphi A (strain ATCC 9150 / SARB42) protein is Crotonobetaine/carnitine--CoA ligase.